The chain runs to 288 residues: Diaminopimelate epimerase (288 aa).

The substrate site is built by asparagine 13, glutamine 46, and asparagine 66. Residue cysteine 75 is the Proton donor of the active site. Substrate contacts are provided by residues 76-77, asparagine 166, asparagine 199, and 217-218; these read GN and ER. Cysteine 226 (proton acceptor) is an active-site residue. 227-228 is a binding site for substrate; sequence GT.

The protein belongs to the diaminopimelate epimerase family. Homodimer.

Its subcellular location is the cytoplasm. The enzyme catalyses (2S,6S)-2,6-diaminopimelate = meso-2,6-diaminopimelate. The protein operates within amino-acid biosynthesis; L-lysine biosynthesis via DAP pathway; DL-2,6-diaminopimelate from LL-2,6-diaminopimelate: step 1/1. Its function is as follows. Catalyzes the stereoinversion of LL-2,6-diaminopimelate (L,L-DAP) to meso-diaminopimelate (meso-DAP), a precursor of L-lysine and an essential component of the bacterial peptidoglycan. This Cupriavidus metallidurans (strain ATCC 43123 / DSM 2839 / NBRC 102507 / CH34) (Ralstonia metallidurans) protein is Diaminopimelate epimerase.